Here is a 220-residue protein sequence, read N- to C-terminus: Ribose-5-phosphate isomerase A (220 aa).

Substrate contacts are provided by residues threonine 28–threonine 31, aspartate 81–aspartate 84, and lysine 94–glycine 97. Glutamate 103 functions as the Proton acceptor in the catalytic mechanism. Lysine 121 is a substrate binding site.

This sequence belongs to the ribose 5-phosphate isomerase family. As to quaternary structure, homodimer.

It carries out the reaction aldehydo-D-ribose 5-phosphate = D-ribulose 5-phosphate. It functions in the pathway carbohydrate degradation; pentose phosphate pathway; D-ribose 5-phosphate from D-ribulose 5-phosphate (non-oxidative stage): step 1/1. Catalyzes the reversible conversion of ribose-5-phosphate to ribulose 5-phosphate. This Leptothrix cholodnii (strain ATCC 51168 / LMG 8142 / SP-6) (Leptothrix discophora (strain SP-6)) protein is Ribose-5-phosphate isomerase A.